The chain runs to 158 residues: Ribosome-binding factor A (158 aa).

Positions 127–158 (RQGAVHAGDADPYKESAAEEPAAYEDDERRPD) are disordered. Residues 134–143 (GDADPYKESA) show a composition bias toward basic and acidic residues.

This sequence belongs to the RbfA family. As to quaternary structure, monomer. Binds 30S ribosomal subunits, but not 50S ribosomal subunits or 70S ribosomes.

It localises to the cytoplasm. One of several proteins that assist in the late maturation steps of the functional core of the 30S ribosomal subunit. Associates with free 30S ribosomal subunits (but not with 30S subunits that are part of 70S ribosomes or polysomes). Required for efficient processing of 16S rRNA. May interact with the 5'-terminal helix region of 16S rRNA. This Mycobacteroides abscessus (strain ATCC 19977 / DSM 44196 / CCUG 20993 / CIP 104536 / JCM 13569 / NCTC 13031 / TMC 1543 / L948) (Mycobacterium abscessus) protein is Ribosome-binding factor A.